Consider the following 601-residue polypeptide: Elongation factor 4 (601 aa).

In terms of domain architecture, tr-type G spans Gln-6–Lys-188. GTP-binding positions include Asp-18–Thr-23 and Asn-135–Asp-138.

This sequence belongs to the TRAFAC class translation factor GTPase superfamily. Classic translation factor GTPase family. LepA subfamily.

Its subcellular location is the cell inner membrane. The enzyme catalyses GTP + H2O = GDP + phosphate + H(+). Required for accurate and efficient protein synthesis under certain stress conditions. May act as a fidelity factor of the translation reaction, by catalyzing a one-codon backward translocation of tRNAs on improperly translocated ribosomes. Back-translocation proceeds from a post-translocation (POST) complex to a pre-translocation (PRE) complex, thus giving elongation factor G a second chance to translocate the tRNAs correctly. Binds to ribosomes in a GTP-dependent manner. This is Elongation factor 4 from Leptospira borgpetersenii serovar Hardjo-bovis (strain JB197).